Reading from the N-terminus, the 383-residue chain is Acetylornithine deacetylase (383 aa).

Zn(2+) is bound at residue H80. The active site involves D82. Residue D112 coordinates Zn(2+). E144 is a catalytic residue. E145, E169, and H355 together coordinate Zn(2+).

It belongs to the peptidase M20A family. ArgE subfamily. As to quaternary structure, homodimer. Requires Zn(2+) as cofactor. Co(2+) serves as cofactor. The cofactor is glutathione.

The protein resides in the cytoplasm. It catalyses the reaction N(2)-acetyl-L-ornithine + H2O = L-ornithine + acetate. Its pathway is amino-acid biosynthesis; L-arginine biosynthesis; L-ornithine from N(2)-acetyl-L-ornithine (linear): step 1/1. Functionally, catalyzes the hydrolysis of the amide bond of N(2)-acetylated L-amino acids. Cleaves the acetyl group from N-acetyl-L-ornithine to form L-ornithine, an intermediate in L-arginine biosynthesis pathway, and a branchpoint in the synthesis of polyamines. This chain is Acetylornithine deacetylase, found in Escherichia coli O17:K52:H18 (strain UMN026 / ExPEC).